The following is a 330-amino-acid chain: DNA-directed RNA polymerase subunit alpha (330 aa).

The alpha N-terminal domain (alpha-NTD) stretch occupies residues 1-231 (MQTNLLKPKT…EQLAVFAQLE (231 aa)). The tract at residues 250–330 (FDPILLRPVD…NWPPAGLDKR (81 aa)) is alpha C-terminal domain (alpha-CTD).

The protein belongs to the RNA polymerase alpha chain family. As to quaternary structure, homodimer. The RNAP catalytic core consists of 2 alpha, 1 beta, 1 beta' and 1 omega subunit. When a sigma factor is associated with the core the holoenzyme is formed, which can initiate transcription.

It catalyses the reaction RNA(n) + a ribonucleoside 5'-triphosphate = RNA(n+1) + diphosphate. DNA-dependent RNA polymerase catalyzes the transcription of DNA into RNA using the four ribonucleoside triphosphates as substrates. The sequence is that of DNA-directed RNA polymerase subunit alpha from Paracidovorax citrulli (strain AAC00-1) (Acidovorax citrulli).